A 104-amino-acid polypeptide reads, in one-letter code: L-rhamnose mutarotase (104 aa).

Tyrosine 18 provides a ligand contact to substrate. Histidine 22 acts as the Proton donor in catalysis. Substrate contacts are provided by residues tyrosine 41 and 76-77 (WW).

Belongs to the rhamnose mutarotase family. Homodimer.

The protein localises to the cytoplasm. The enzyme catalyses alpha-L-rhamnose = beta-L-rhamnose. It participates in carbohydrate metabolism; L-rhamnose metabolism. In terms of biological role, involved in the anomeric conversion of L-rhamnose. The protein is L-rhamnose mutarotase of Rhizobium meliloti (strain 1021) (Ensifer meliloti).